The primary structure comprises 1132 residues: Eisosome protein SEG2 (1132 aa).

The segment covering 76-95 has biased composition (polar residues); it reads KRTSSLPNQGHKNTSNNSAG. 2 disordered regions span residues 76–142 and 171–225; these read KRTS…GNSG and RYSL…NDYH. A compositionally biased stretch (basic and acidic residues) spans 101–113; it reads AHEDAETTFREFG. The span at 115–142 shows a compositional bias: polar residues; it reads KQSSKVLNISSSTGQNSKSRTTSLGNSG. At Ser-137 the chain carries Phosphoserine. Positions 208 to 225 are enriched in basic and acidic residues; sequence GSQEKKSESGGKSKNDYH. Ser-280 carries the post-translational modification Phosphoserine. The disordered stretch occupies residues 404-429; it reads PTLSEPKPAYVPPEDVEKEPSTLSNQ. Residues Ser-504 and Ser-507 each carry the phosphoserine modification. 2 disordered regions span residues 510 to 938 and 961 to 993; these read GGNQ…FRSM and EKKEKGGHVSRKSWTFGLPSPLKRRTSHSTHTT. Lys-526 participates in a covalent cross-link: Glycyl lysine isopeptide (Lys-Gly) (interchain with G-Cter in ubiquitin). 2 stretches are compositionally biased toward acidic residues: residues 550–561 and 595–644; these read DQEEALSDNEPE and KDDD…DDEY. Ser-556 carries the phosphoserine modification. Composition is skewed to polar residues over residues 688 to 699 and 710 to 735; these read SENAEVSQSGTN and YLTNTSSDTFSLDSENVNSKSSTDTT. Residue Lys-743 forms a Glycyl lysine isopeptide (Lys-Gly) (interchain with G-Cter in ubiquitin) linkage. Over residues 761-773 the composition is skewed to low complexity; sequence SSTSSSIYSIETS. 2 stretches are compositionally biased toward polar residues: residues 774-810 and 827-845; these read PNIDSSTGKTASNTKTNSHGPPTSISKQKYDQSSSHQ and NRSCLRTLRGSSNEATLSH. Residues 850–860 are compositionally biased toward low complexity; the sequence is PASDSSSSPPY. Positions 916-930 are enriched in basic and acidic residues; it reads PPARKSSFEKERPAK. Phosphoserine occurs at positions 980 and 1022.

Belongs to the SEG1 family. In terms of assembly, component of eisosomes, large cytoplasmic protein assemblies that localize to specialized domains termed MCCs on the plasma membrane.

It is found in the cell membrane. Its function is as follows. Likely plays only a minor role in eisosome assembly. The polypeptide is Eisosome protein SEG2 (SEG2) (Saccharomyces cerevisiae (strain ATCC 204508 / S288c) (Baker's yeast)).